Reading from the N-terminus, the 213-residue chain is Transcription antitermination protein NusB (213 aa).

It belongs to the NusB family.

Involved in transcription antitermination. Required for transcription of ribosomal RNA (rRNA) genes. Binds specifically to the boxA antiterminator sequence of the ribosomal RNA (rrn) operons. This is Transcription antitermination protein NusB from Synechococcus elongatus (strain ATCC 33912 / PCC 7942 / FACHB-805) (Anacystis nidulans R2).